The chain runs to 490 residues: Glutamate--tRNA ligase (490 aa).

Positions 12 to 22 match the 'HIGH' region motif; sequence PSPTGTPHVGL. The short motif at 256 to 260 is the 'KMSKS' region element; it reads KLSKR. K259 is an ATP binding site.

Belongs to the class-I aminoacyl-tRNA synthetase family. Glutamate--tRNA ligase type 1 subfamily. As to quaternary structure, monomer.

Its subcellular location is the cytoplasm. The catalysed reaction is tRNA(Glu) + L-glutamate + ATP = L-glutamyl-tRNA(Glu) + AMP + diphosphate. Functionally, catalyzes the attachment of glutamate to tRNA(Glu) in a two-step reaction: glutamate is first activated by ATP to form Glu-AMP and then transferred to the acceptor end of tRNA(Glu). The chain is Glutamate--tRNA ligase from Mycobacterium sp. (strain JLS).